The following is a 135-amino-acid chain: 6,7-dimethyl-8-ribityllumazine synthase (135 aa).

Residues Phe12, 44 to 46, and 68 to 70 each bind 5-amino-6-(D-ribitylamino)uracil; these read AYD and CVI. Residue 73–74 participates in (2S)-2-hydroxy-3-oxobutyl phosphate binding; the sequence is AT. His76 acts as the Proton donor in catalysis. Residue Leu101 coordinates 5-amino-6-(D-ribitylamino)uracil. Position 116 (Arg116) interacts with (2S)-2-hydroxy-3-oxobutyl phosphate.

This sequence belongs to the DMRL synthase family.

The enzyme catalyses (2S)-2-hydroxy-3-oxobutyl phosphate + 5-amino-6-(D-ribitylamino)uracil = 6,7-dimethyl-8-(1-D-ribityl)lumazine + phosphate + 2 H2O + H(+). It participates in cofactor biosynthesis; riboflavin biosynthesis; riboflavin from 2-hydroxy-3-oxobutyl phosphate and 5-amino-6-(D-ribitylamino)uracil: step 1/2. Functionally, catalyzes the formation of 6,7-dimethyl-8-ribityllumazine by condensation of 5-amino-6-(D-ribitylamino)uracil with 3,4-dihydroxy-2-butanone 4-phosphate. This is the penultimate step in the biosynthesis of riboflavin. This chain is 6,7-dimethyl-8-ribityllumazine synthase, found in Methanoculleus marisnigri (strain ATCC 35101 / DSM 1498 / JR1).